The chain runs to 192 residues: Phage-like element PBSX protein XkdU (192 aa).

It to B.subtilis YqcA.

In Bacillus subtilis (strain 168), this protein is Phage-like element PBSX protein XkdU (xkdU).